Reading from the N-terminus, the 256-residue chain is Ubiquinone/menaquinone biosynthesis C-methyltransferase UbiE (256 aa).

The span at 1-12 shows a compositional bias: basic and acidic residues; sequence MNDQRKGDHAEP. A disordered region spans residues 1–23; sequence MNDQRKGDHAEPTTHFGYQDVPE. Residues Thr79, Asp100, and 128–129 contribute to the S-adenosyl-L-methionine site; that span reads DA.

It belongs to the class I-like SAM-binding methyltransferase superfamily. MenG/UbiE family.

The catalysed reaction is a 2-demethylmenaquinol + S-adenosyl-L-methionine = a menaquinol + S-adenosyl-L-homocysteine + H(+). It carries out the reaction a 2-methoxy-6-(all-trans-polyprenyl)benzene-1,4-diol + S-adenosyl-L-methionine = a 5-methoxy-2-methyl-3-(all-trans-polyprenyl)benzene-1,4-diol + S-adenosyl-L-homocysteine + H(+). It functions in the pathway quinol/quinone metabolism; menaquinone biosynthesis; menaquinol from 1,4-dihydroxy-2-naphthoate: step 2/2. The protein operates within cofactor biosynthesis; ubiquinone biosynthesis. In terms of biological role, methyltransferase required for the conversion of demethylmenaquinol (DMKH2) to menaquinol (MKH2) and the conversion of 2-polyprenyl-6-methoxy-1,4-benzoquinol (DDMQH2) to 2-polyprenyl-3-methyl-6-methoxy-1,4-benzoquinol (DMQH2). This is Ubiquinone/menaquinone biosynthesis C-methyltransferase UbiE from Pseudomonas putida (strain ATCC 700007 / DSM 6899 / JCM 31910 / BCRC 17059 / LMG 24140 / F1).